The following is a 73-amino-acid chain: Small ribosomal subunit protein bS18 (73 aa).

It belongs to the bacterial ribosomal protein bS18 family. As to quaternary structure, part of the 30S ribosomal subunit. Forms a tight heterodimer with protein bS6.

In terms of biological role, binds as a heterodimer with protein bS6 to the central domain of the 16S rRNA, where it helps stabilize the platform of the 30S subunit. The sequence is that of Small ribosomal subunit protein bS18 from Synechococcus sp. (strain RCC307).